Consider the following 399-residue polypeptide: MEQEIISAVQDIIDFINTRGPTKVFVIDSHFKNNRSITPVWTKNDLSLVAFIKKFPEYFIIGTDLIVSHKNIPIDFQTIIQSWNLVEDDFALTEKIVGKKLTMFEFPNNLDIIVTSDFQIVDNWIENNIYDLKQEIIGLDTETLISGKSEKISIIQLSTSKHNIIIQVNQMNTLPQNLNKVFFDESIIKVGVAIDIDAKKLLQYFPTINQIKKTLDLSDLFKQTNFTKHISINPKESIGLKILAAHVLDLYIENKGDSEIKKSNWNNPVLTSDQVKYAITDSYLSLMIYNELQLMTNNLDVKNLLKNFCHIDESSVKKNSKNNLTRRELEQKEQERRLKSIESKIKKWLKEDDSLTFEFESMNAFYRRHVHTFVEKIPELSSETKGTDPNKYVIITRHC.

The 3'-5' exonuclease domain occupies 118 to 297 (FQIVDNWIEN…IYNELQLMTN (180 aa)). The R3H domain maps to 335-399 (ERRLKSIESK…NKYVIITRHC (65 aa)).

This chain is Putative 3'-5' exonuclease R431, found in Acanthamoeba polyphaga (Amoeba).